The primary structure comprises 290 residues: Transposon Ty3-G Gag polyprotein (290 aa).

At serine 2 the chain carries N-acetylserine. The CCHC-type zinc finger occupies 265 to 282 (RLCFYCKKEGHRLNECRA).

The protein localises to the cytoplasm. In terms of biological role, capsid protein (CA) is the structural component of the virus-like particle (VLP), forming the shell that encapsulates the retrotransposons dimeric RNA genome. Functionally, nucleocapsid protein p9 (NC) forms the nucleocore that coats the retro-elements dimeric RNA. Binds these RNAs through its zinc fingers. Promotes primer tRNA(i)-Met annealing to the multipartite primer-binding site (PBS), dimerization of Ty3 RNA and initiation of reverse transcription. This is Transposon Ty3-G Gag polyprotein (TY3A-G) from Saccharomyces cerevisiae (strain ATCC 204508 / S288c) (Baker's yeast).